We begin with the raw amino-acid sequence, 868 residues long: Receptor-like protein kinase At5g59670 (868 aa).

A signal peptide spans 1–22 (MESSFGLLLALLTLTIIHIVQA). Residues 23–500 (QDPQGFISLD…PRLIKPPKKE (478 aa)) lie on the Extracellular side of the membrane. 12 N-linked (GlcNAc...) asparagine glycosylation sites follow: Asn38, Asn94, Asn141, Asn287, Asn300, Asn372, Asn405, Asn416, Asn423, Asn445, Asn464, and Asn471. 3 LRR repeats span residues 409–432 (PPRI…AIQS), 433–459 (ITQL…KMKS), and 461–481 (SVIN…LRKK). The helical transmembrane segment at 501 to 521 (FPVAIVTLVVFVTVIVVLFLV) threads the bilayer. At 522-868 (FRKKMSTIVK…LDTTAVPMAR (347 aa)) the chain is on the cytoplasmic side. Position 555 is a phosphothreonine (Thr555). The Protein kinase domain maps to 564–834 (KNFQRVLGKG…SMSQVIHELK (271 aa)). ATP is bound by residues 570 to 578 (LGKGGFGMV) and Lys592. Tyr637 carries the post-translational modification Phosphotyrosine. The active-site Proton acceptor is the Asp689. Ser723 bears the Phosphoserine mark. 2 positions are modified to phosphothreonine: Thr724 and Thr729.

This sequence belongs to the protein kinase superfamily. Ser/Thr protein kinase family. Post-translationally, autophosphorylated on Tyr and Thr residues.

Its subcellular location is the cell membrane. The enzyme catalyses L-seryl-[protein] + ATP = O-phospho-L-seryl-[protein] + ADP + H(+). It carries out the reaction L-threonyl-[protein] + ATP = O-phospho-L-threonyl-[protein] + ADP + H(+). It catalyses the reaction L-tyrosyl-[protein] + ATP = O-phospho-L-tyrosyl-[protein] + ADP + H(+). Functionally, probable receptor with a dual specificity kinase activity acting on both serine/threonine- and tyrosine-containing substrates. The polypeptide is Receptor-like protein kinase At5g59670 (Arabidopsis thaliana (Mouse-ear cress)).